Consider the following 471-residue polypeptide: Glutamate--tRNA ligase (471 aa).

Positions 10-20 (PSPTGYLHIGG) match the 'HIGH' region motif. Zn(2+) contacts are provided by cysteine 107, cysteine 109, cysteine 134, and glutamate 136. Residues 244 to 248 (RLSKR) carry the 'KMSKS' region motif. Lysine 247 contacts ATP.

The protein belongs to the class-I aminoacyl-tRNA synthetase family. Glutamate--tRNA ligase type 1 subfamily. In terms of assembly, monomer. It depends on Zn(2+) as a cofactor.

The protein resides in the cytoplasm. The catalysed reaction is tRNA(Glu) + L-glutamate + ATP = L-glutamyl-tRNA(Glu) + AMP + diphosphate. Catalyzes the attachment of glutamate to tRNA(Glu) in a two-step reaction: glutamate is first activated by ATP to form Glu-AMP and then transferred to the acceptor end of tRNA(Glu). This is Glutamate--tRNA ligase from Anaeromyxobacter sp. (strain Fw109-5).